We begin with the raw amino-acid sequence, 494 residues long: Lysine--tRNA ligase (494 aa).

Mg(2+)-binding residues include E399 and E406.

This sequence belongs to the class-II aminoacyl-tRNA synthetase family. It depends on Mg(2+) as a cofactor.

It localises to the cytoplasm. The enzyme catalyses tRNA(Lys) + L-lysine + ATP = L-lysyl-tRNA(Lys) + AMP + diphosphate. In Saccharolobus solfataricus (strain ATCC 35092 / DSM 1617 / JCM 11322 / P2) (Sulfolobus solfataricus), this protein is Lysine--tRNA ligase (lysS).